The primary structure comprises 351 residues: Fe(3+) ions import ATP-binding protein FbpC (351 aa).

An ABC transporter domain is found at 7–241; sequence LTVKNLNKFF…PNHLETAKFM (235 aa). 39-46 contacts ATP; that stretch reads GASGCGKT.

This sequence belongs to the ABC transporter superfamily. Fe(3+) ion importer (TC 3.A.1.10) family. As to quaternary structure, the complex is composed of two ATP-binding proteins (FbpC), two transmembrane proteins (FbpB) and a solute-binding protein (FbpA).

It is found in the cell inner membrane. The enzyme catalyses Fe(3+)(out) + ATP + H2O = Fe(3+)(in) + ADP + phosphate + H(+). Functionally, part of the ABC transporter complex FbpABC involved in Fe(3+) ions import. Responsible for energy coupling to the transport system. This is Fe(3+) ions import ATP-binding protein FbpC from Haemophilus influenzae (strain 86-028NP).